We begin with the raw amino-acid sequence, 611 residues long: uncharacterized protein (611 aa).

Belongs to the metallo-dependent hydrolases superfamily. N-acyl-D-amino-acid deacylase family.

This is an uncharacterized protein from Mycobacterium bovis (strain ATCC BAA-935 / AF2122/97).